Here is a 369-residue protein sequence, read N- to C-terminus: UDP-3-O-(3-hydroxymyristoyl)glucosamine N-acyltransferase (369 aa).

The Proton acceptor role is filled by histidine 240.

Belongs to the transferase hexapeptide repeat family. LpxD subfamily. Homotrimer.

The catalysed reaction is a UDP-3-O-[(3R)-3-hydroxyacyl]-alpha-D-glucosamine + a (3R)-hydroxyacyl-[ACP] = a UDP-2-N,3-O-bis[(3R)-3-hydroxyacyl]-alpha-D-glucosamine + holo-[ACP] + H(+). The enzyme catalyses UDP-3-O-[(3R)-3-hydroxytetradecanoyl]-alpha-D-glucosamine + (3R)-hydroxytetradecanoyl-[ACP] = UDP-2-N,3-O-bis[(3R)-3-hydroxytetradecanoyl]-alpha-D-glucosamine + holo-[ACP] + H(+). Its pathway is glycolipid biosynthesis; lipid IV(A) biosynthesis; lipid IV(A) from (3R)-3-hydroxytetradecanoyl-[acyl-carrier-protein] and UDP-N-acetyl-alpha-D-glucosamine: step 3/6. Functionally, catalyzes the N-acylation of UDP-3-O-(hydroxytetradecanoyl)glucosamine using 3-hydroxytetradecanoyl-ACP as the acyl donor. Is involved in the biosynthesis of lipid A, a phosphorylated glycolipid that anchors the lipopolysaccharide to the outer membrane of the cell. This is UDP-3-O-(3-hydroxymyristoyl)glucosamine N-acyltransferase from Blochmanniella floridana.